The primary structure comprises 1299 residues: DNA-directed RNA polymerase subunit beta' (1299 aa).

The Zn(2+) site is built by Cys-60, Cys-62, Cys-75, and Cys-78. A disordered region spans residues 188–209 (GAKSDQKRRAKDGAEKEMGQTR). Mg(2+) contacts are provided by Asp-535, Asp-537, and Asp-539. Zn(2+)-binding residues include Cys-882, Cys-959, Cys-966, and Cys-969.

The protein belongs to the RNA polymerase beta' chain family. As to quaternary structure, the RNAP catalytic core consists of 2 alpha, 1 beta, 1 beta' and 1 omega subunit. When a sigma factor is associated with the core the holoenzyme is formed, which can initiate transcription. Requires Mg(2+) as cofactor. Zn(2+) serves as cofactor.

It carries out the reaction RNA(n) + a ribonucleoside 5'-triphosphate = RNA(n+1) + diphosphate. Its function is as follows. DNA-dependent RNA polymerase catalyzes the transcription of DNA into RNA using the four ribonucleoside triphosphates as substrates. The protein is DNA-directed RNA polymerase subunit beta' of Clavibacter michiganensis subsp. michiganensis (strain NCPPB 382).